A 201-amino-acid chain; its full sequence is IMP cyclohydrolase (201 aa).

Belongs to the archaeal IMP cyclohydrolase family.

The catalysed reaction is IMP + H2O = 5-formamido-1-(5-phospho-D-ribosyl)imidazole-4-carboxamide. It functions in the pathway purine metabolism; IMP biosynthesis via de novo pathway; IMP from 5-formamido-1-(5-phospho-D-ribosyl)imidazole-4-carboxamide: step 1/1. Functionally, catalyzes the cyclization of 5-formylamidoimidazole-4-carboxamide ribonucleotide to IMP. The protein is IMP cyclohydrolase of Methanococcus maripaludis (strain C5 / ATCC BAA-1333).